We begin with the raw amino-acid sequence, 377 residues long: Dual-specificity RNA methyltransferase RlmN (377 aa).

The active-site Proton acceptor is the Glu102. Positions Glu108 to Asp345 constitute a Radical SAM core domain. An intrachain disulfide couples Cys115 to Cys350. [4Fe-4S] cluster contacts are provided by Cys122, Cys126, and Cys129. Residues Gly177 to Glu178, Ser209, Ser231 to Asn233, and Asn307 contribute to the S-adenosyl-L-methionine site. Residue Cys350 is the S-methylcysteine intermediate of the active site. The tract at residues Ala354 to Gly377 is disordered.

This sequence belongs to the radical SAM superfamily. RlmN family. [4Fe-4S] cluster is required as a cofactor.

The protein localises to the cytoplasm. It carries out the reaction adenosine(2503) in 23S rRNA + 2 reduced [2Fe-2S]-[ferredoxin] + 2 S-adenosyl-L-methionine = 2-methyladenosine(2503) in 23S rRNA + 5'-deoxyadenosine + L-methionine + 2 oxidized [2Fe-2S]-[ferredoxin] + S-adenosyl-L-homocysteine. It catalyses the reaction adenosine(37) in tRNA + 2 reduced [2Fe-2S]-[ferredoxin] + 2 S-adenosyl-L-methionine = 2-methyladenosine(37) in tRNA + 5'-deoxyadenosine + L-methionine + 2 oxidized [2Fe-2S]-[ferredoxin] + S-adenosyl-L-homocysteine. Its function is as follows. Specifically methylates position 2 of adenine 2503 in 23S rRNA and position 2 of adenine 37 in tRNAs. m2A2503 modification seems to play a crucial role in the proofreading step occurring at the peptidyl transferase center and thus would serve to optimize ribosomal fidelity. The chain is Dual-specificity RNA methyltransferase RlmN from Anaeromyxobacter sp. (strain Fw109-5).